The chain runs to 303 residues: Putative 1-phosphofructokinase (303 aa).

Residues 217-222 (SDGDKG) and 249-250 (GD) contribute to the ATP site. The Proton acceptor role is filled by Asp-250.

It belongs to the carbohydrate kinase PfkB family.

It catalyses the reaction beta-D-fructose 1-phosphate + ATP = beta-D-fructose 1,6-bisphosphate + ADP + H(+). In terms of biological role, catalyzes the ATP-dependent phosphorylation of fructose-l-phosphate to fructose-l,6-bisphosphate. The sequence is that of Putative 1-phosphofructokinase (fruK) from Mycoplasma genitalium (strain ATCC 33530 / DSM 19775 / NCTC 10195 / G37) (Mycoplasmoides genitalium).